A 267-amino-acid polypeptide reads, in one-letter code: tRNA pseudouridine synthase A (267 aa).

Asp54 acts as the Nucleophile in catalysis. Tyr114 contacts substrate.

Belongs to the tRNA pseudouridine synthase TruA family. Homodimer.

The catalysed reaction is uridine(38/39/40) in tRNA = pseudouridine(38/39/40) in tRNA. Functionally, formation of pseudouridine at positions 38, 39 and 40 in the anticodon stem and loop of transfer RNAs. The sequence is that of tRNA pseudouridine synthase A from Tropheryma whipplei (strain TW08/27) (Whipple's bacillus).